Consider the following 140-residue polypeptide: Small ribosomal subunit protein uS11c (140 aa).

Belongs to the universal ribosomal protein uS11 family. Part of the 30S ribosomal subunit.

Its subcellular location is the plastid. The protein localises to the chloroplast. This chain is Small ribosomal subunit protein uS11c, found in Pelargonium hortorum (Common geranium).